A 456-amino-acid chain; its full sequence is Bifunctional protein GlmU (456 aa).

The interval 1 to 229 (MLNSAMSVVI…ISETDGVNNR (229 aa)) is pyrophosphorylase. Residues 11-14 (LAAG), K25, Q76, 81-82 (GT), 103-105 (YGD), G140, E154, N169, and N227 each bind UDP-N-acetyl-alpha-D-glucosamine. D105 contributes to the Mg(2+) binding site. N227 contacts Mg(2+). The interval 230–250 (LQLSRLERIYQAEQAEKLLLS) is linker. Residues 251–456 (GVMLRDPARF…QGWQRPVKKK (206 aa)) form an N-acetyltransferase region. Positions 333 and 351 each coordinate UDP-N-acetyl-alpha-D-glucosamine. The Proton acceptor role is filled by H363. Residues Y366 and N377 each coordinate UDP-N-acetyl-alpha-D-glucosamine. Residues A380, 386–387 (NY), S405, A423, and R440 each bind acetyl-CoA.

The protein in the N-terminal section; belongs to the N-acetylglucosamine-1-phosphate uridyltransferase family. This sequence in the C-terminal section; belongs to the transferase hexapeptide repeat family. In terms of assembly, homotrimer. It depends on Mg(2+) as a cofactor.

The protein resides in the cytoplasm. It catalyses the reaction alpha-D-glucosamine 1-phosphate + acetyl-CoA = N-acetyl-alpha-D-glucosamine 1-phosphate + CoA + H(+). The enzyme catalyses N-acetyl-alpha-D-glucosamine 1-phosphate + UTP + H(+) = UDP-N-acetyl-alpha-D-glucosamine + diphosphate. It participates in nucleotide-sugar biosynthesis; UDP-N-acetyl-alpha-D-glucosamine biosynthesis; N-acetyl-alpha-D-glucosamine 1-phosphate from alpha-D-glucosamine 6-phosphate (route II): step 2/2. It functions in the pathway nucleotide-sugar biosynthesis; UDP-N-acetyl-alpha-D-glucosamine biosynthesis; UDP-N-acetyl-alpha-D-glucosamine from N-acetyl-alpha-D-glucosamine 1-phosphate: step 1/1. Its pathway is bacterial outer membrane biogenesis; LPS lipid A biosynthesis. Catalyzes the last two sequential reactions in the de novo biosynthetic pathway for UDP-N-acetylglucosamine (UDP-GlcNAc). The C-terminal domain catalyzes the transfer of acetyl group from acetyl coenzyme A to glucosamine-1-phosphate (GlcN-1-P) to produce N-acetylglucosamine-1-phosphate (GlcNAc-1-P), which is converted into UDP-GlcNAc by the transfer of uridine 5-monophosphate (from uridine 5-triphosphate), a reaction catalyzed by the N-terminal domain. The protein is Bifunctional protein GlmU of Salmonella gallinarum (strain 287/91 / NCTC 13346).